Here is a 222-residue protein sequence, read N- to C-terminus: Abasic site processing protein YedK (222 aa).

The active-site Nucleophile is cysteine 2. A Thiazolidine linkage to a ring-opened DNA abasic site modification is found at cysteine 2. The active site involves glutamate 105.

It belongs to the SOS response-associated peptidase family.

Formation and reversal of DNA-protein cross-link depends on DNA context. Catalyzes formation of the thiazolidine linkage in presence of abasic sites in single-stranded DNA. Mediates the reversal of the thiazolidine cross-link in presence of double stranded DNA. In terms of biological role, sensor of abasic sites in single-stranded DNA (ssDNA) required to preserve genome integrity by promoting error-free repair of abasic sites. Recognizes and binds abasic sites in ssDNA at replication forks and chemically modifies the lesion by forming a covalent cross-link with DNA: forms a stable thiazolidine linkage between a ring-opened abasic site and the alpha-amino and sulfhydryl substituents of its N-terminal catalytic cysteine residue. The DNA-protein cross-link is then reversed: able to catalyze the reversal of the thiazolidine cross-link and cycle between a cross-link and a non-cross-linked state depending on DNA context: mediates self-reversal of the thiazolidine cross-link in double stranded DNA. May act as a protease: mediates autocatalytic processing of its N-terminal methionine in order to expose the catalytic cysteine. This chain is Abasic site processing protein YedK, found in Escherichia coli (strain K12).